The primary structure comprises 713 residues: Phosphoribosylformylglycinamidine synthase subunit PurL (713 aa).

H32 is a catalytic residue. Y35 is an ATP binding site. Residue E76 coordinates Mg(2+). Residues 77–80 and R99 each bind substrate; that span reads SHNH. The active-site Proton acceptor is the H78. D100 serves as a coordination point for Mg(2+). Residue Q224 coordinates substrate. D252 serves as a coordination point for Mg(2+). 296–298 provides a ligand contact to substrate; sequence ESQ. 2 residues coordinate ATP: D471 and G508. Residue N509 coordinates Mg(2+). S511 contacts substrate.

It belongs to the FGAMS family. As to quaternary structure, monomer. Part of the FGAM synthase complex composed of 1 PurL, 1 PurQ and 2 PurS subunits.

It is found in the cytoplasm. The catalysed reaction is N(2)-formyl-N(1)-(5-phospho-beta-D-ribosyl)glycinamide + L-glutamine + ATP + H2O = 2-formamido-N(1)-(5-O-phospho-beta-D-ribosyl)acetamidine + L-glutamate + ADP + phosphate + H(+). It functions in the pathway purine metabolism; IMP biosynthesis via de novo pathway; 5-amino-1-(5-phospho-D-ribosyl)imidazole from N(2)-formyl-N(1)-(5-phospho-D-ribosyl)glycinamide: step 1/2. Part of the phosphoribosylformylglycinamidine synthase complex involved in the purines biosynthetic pathway. Catalyzes the ATP-dependent conversion of formylglycinamide ribonucleotide (FGAR) and glutamine to yield formylglycinamidine ribonucleotide (FGAM) and glutamate. The FGAM synthase complex is composed of three subunits. PurQ produces an ammonia molecule by converting glutamine to glutamate. PurL transfers the ammonia molecule to FGAR to form FGAM in an ATP-dependent manner. PurS interacts with PurQ and PurL and is thought to assist in the transfer of the ammonia molecule from PurQ to PurL. This is Phosphoribosylformylglycinamidine synthase subunit PurL from Thermococcus sibiricus (strain DSM 12597 / MM 739).